Consider the following 408-residue polypeptide: uncharacterized protein (408 aa).

The protein belongs to the protein kinase superfamily. ADCK protein kinase family.

This is an uncharacterized protein from Synechocystis sp. (strain ATCC 27184 / PCC 6803 / Kazusa).